A 241-amino-acid polypeptide reads, in one-letter code: MSNKNVNVRKSQEITFCLLAGILMFMAMVVAGRAEAGVALGATRVIYPAGQKQVQLAVTNNDENSTYLIQSWVENADGVKDGRFIVTPPLFAMKGKKENTLRILDATNNQLPQDRESLFWMNVKAIPSMDKSKLTENTLQLAIISRIKLYYRPAKLALPPDQAAEKLRFRRSANSLTLINPTPYYLTVTELNAGTRVLENALVPPMGESAVKLPSDAGSNITYRTINDYGALTPKMTGVME.

The signal sequence occupies residues 1–36 (MSNKNVNVRKSQEITFCLLAGILMFMAMVVAGRAEA).

Belongs to the periplasmic pilus chaperone family.

It is found in the periplasm. Functionally, required for the biogenesis of type 1 fimbriae. Binds and interact with FimH. The sequence is that of Chaperone protein FimC (fimC) from Escherichia coli O6:H1 (strain CFT073 / ATCC 700928 / UPEC).